The following is a 525-amino-acid chain: GMP synthase [glutamine-hydrolyzing] (525 aa).

Residues 8 to 207 form the Glutamine amidotransferase type-1 domain; it reads KILILDFGSQ…ALEICACAAN (200 aa). Cysteine 85 (nucleophile) is an active-site residue. Residues histidine 181 and glutamate 183 contribute to the active site. One can recognise a GMPS ATP-PPase domain in the interval 208–400; sequence WKPASIIEDA…LGLPYNMLYR (193 aa). Residue 235–241 participates in ATP binding; sequence SGGVDSS.

Homodimer.

It catalyses the reaction XMP + L-glutamine + ATP + H2O = GMP + L-glutamate + AMP + diphosphate + 2 H(+). The protein operates within purine metabolism; GMP biosynthesis; GMP from XMP (L-Gln route): step 1/1. Its function is as follows. Catalyzes the synthesis of GMP from XMP. The chain is GMP synthase [glutamine-hydrolyzing] from Shewanella halifaxensis (strain HAW-EB4).